A 37-amino-acid chain; its full sequence is Omega-agatoxin-Aa3d (37 aa).

The protein belongs to the neurotoxin 04 (omega-agtx) family. 03 (type II/III omega-agtx) subfamily. In terms of processing, disulfide bonds are present. Expressed by the venom gland.

It is found in the secreted. Its function is as follows. Omega-agatoxins are antagonists of voltage-gated calcium channels. This toxin blocks calcium channels in insect central neurons but not at peripheral neuromuscular junctions. In vertebrates, it is broadly active against all high-threshold Cav1/CACNA1 channels and Cav2.2/CACNA1B channels. This chain is Omega-agatoxin-Aa3d, found in Agelenopsis aperta (North American funnel-web spider).